The chain runs to 109 residues: Nucleoid-associated protein YbaB (109 aa).

Belongs to the YbaB/EbfC family. Homodimer.

The protein localises to the cytoplasm. It is found in the nucleoid. Binds to DNA and alters its conformation. May be involved in regulation of gene expression, nucleoid organization and DNA protection. The chain is Nucleoid-associated protein YbaB from Escherichia coli O127:H6 (strain E2348/69 / EPEC).